The primary structure comprises 512 residues: Hyaluronidase PH-20 (512 aa).

The N-terminal stretch at 1–35 is a signal peptide; sequence MGELQFKWLFWRSFAESGGTFQTVLIFLFIPYSLT. 2 cysteine pairs are disulfide-bonded: Cys60/Cys351 and Cys223/Cys237. Asn63 carries N-linked (GlcNAc...) asparagine glycosylation. The Proton donor role is filled by Glu147. Asn165 and Asn179 each carry an N-linked (GlcNAc...) asparagine glycan. Asn368 carries an N-linked (GlcNAc...) asparagine glycan. Cystine bridges form between Cys376–Cys387, Cys381–Cys435, and Cys437–Cys464. A glycan (N-linked (GlcNAc...) asparagine) is linked at Asn408.

Belongs to the glycosyl hydrolase 56 family.

The protein resides in the cell membrane. It catalyses the reaction Random hydrolysis of (1-&gt;4)-linkages between N-acetyl-beta-D-glucosamine and D-glucuronate residues in hyaluronate.. Involved in sperm-egg adhesion. Upon fertilization sperm must first penetrate a layer of cumulus cells that surrounds the egg before reaching the zona pellucida. The cumulus cells are embedded in a matrix containing hyaluronic acid which is formed prior to ovulation. This protein aids in penetrating the layer of cumulus cells by digesting hyaluronic acid. This is Hyaluronidase PH-20 (Spam1) from Rattus norvegicus (Rat).